Reading from the N-terminus, the 320-residue chain is Putative fatty acid elongase 3 (320 aa).

N-linked (GlcNAc...) asparagine glycosylation is present at asparagine 14. The next 6 helical transmembrane spans lie at 33-53 (WMQN…AVIF), 67-87 (LDTP…LGFL), 120-140 (FWTE…IFIV), 145-165 (PLIF…WHAY), 203-223 (MAMV…IIGV), and 242-262 (LGLC…FFYH).

It belongs to the ELO family.

The protein resides in the membrane. It catalyses the reaction a very-long-chain acyl-CoA + malonyl-CoA + H(+) = a very-long-chain 3-oxoacyl-CoA + CO2 + CoA. Its pathway is lipid metabolism; fatty acid biosynthesis. Could be implicated in synthesis of very long chain fatty acids. May be required for normally rapid growth. The chain is Putative fatty acid elongase 3 (elo-3) from Caenorhabditis elegans.